The primary structure comprises 162 residues: Endoribonuclease YbeY (162 aa).

The Zn(2+) site is built by His-117, His-121, and His-127.

It belongs to the endoribonuclease YbeY family. The cofactor is Zn(2+).

It is found in the cytoplasm. Its function is as follows. Single strand-specific metallo-endoribonuclease involved in late-stage 70S ribosome quality control and in maturation of the 3' terminus of the 16S rRNA. The chain is Endoribonuclease YbeY from Francisella tularensis subsp. holarctica (strain OSU18).